The sequence spans 469 residues: MPQFLSEDFLLDSEFARRLYHEYAVDQPIFDYHCHLPPEQIAENYRFKNLYDIWLKGDHYKWRAMRTNGVPERLCTGDASDWEKFEAWAATVPHTIGNPLYHWTHLELRRPFGVTGTLLSPSTAKDIWDRCNAMLERDDFTARGIMQQMNVKMVGTTDDPIDDLRHHKTVAQDSSFSIKVLPSWRPDKAFNIELATFNDYMAKLGEVSDTDIRRFSDLQAALTKRLDHFAAHGCKVSDHALDVVMFAEADDATLDSILARRLSGETLSEHEVAQFKTGVLVWLGAEYARRGWVQQYHIGALRNNNLRQFKLLGPDVGFDSINDRPLAQELSRLLSKQNEENLLPKTILYCLNPRDNEVLGTMIGNFQGEGMPGKMQFGSGWWFNDQKDGMQRQMTQLAQLGLLSRFVGMLTDSRSFLSYTRHEYFRRILCQMIGRWVEDGEAPADLPLLGEMVKNISFDNAKNYFAIEL.

This sequence belongs to the metallo-dependent hydrolases superfamily. Uronate isomerase family.

The catalysed reaction is D-glucuronate = D-fructuronate. It catalyses the reaction aldehydo-D-galacturonate = keto-D-tagaturonate. It functions in the pathway carbohydrate metabolism; pentose and glucuronate interconversion. The sequence is that of Uronate isomerase from Pectobacterium carotovorum subsp. carotovorum (strain PC1).